Here is a 477-residue protein sequence, read N- to C-terminus: Monocarboxylate transporter 12-B (477 aa).

The Cytoplasmic portion of the chain corresponds to 1–9 (MAQEKKKGG). 12 helical membrane-spanning segments follow: residues 10–30 (VLPP…VVTV), 58–78 (AWIH…GSLI), 86–106 (IAVI…SFAT), 116–136 (GLLT…MVGI), 148–168 (IAMS…QLLI), 178–198 (LILG…RPII), 253–273 (FLVL…PFVY), 289–309 (AFLM…FGWL), 320–340 (NICY…IPLL), 344–364 (VWLV…VALI), 383–403 (VVYF…GWLV), and 413–433 (FFLS…VAII). At 434–477 (RYCQRNQKKNSLSKIPKLVSCEGKQVDYYPPKNKDLMLIIPATS) the chain is on the cytoplasmic side.

Belongs to the major facilitator superfamily. Monocarboxylate porter (TC 2.A.1.13) family.

It is found in the cell membrane. The protein localises to the basolateral cell membrane. The catalysed reaction is creatine(in) = creatine(out). It carries out the reaction guanidinoacetate(in) = guanidinoacetate(out). Functionally, functions as a transporter for creatine and as well for its precursor guanidinoacetate. Transport of creatine and GAA is independent of resting membrane potential and extracellular Na(+), Cl(-), or pH. Contributes to the process of creatine biosynthesis and distribution. The chain is Monocarboxylate transporter 12-B (slc16a12b) from Danio rerio (Zebrafish).